The primary structure comprises 310 residues: p-hydroxybenzoic acid efflux pump subunit AaeA (310 aa).

The helical transmembrane segment at A12–Y32 threads the bilayer.

The protein belongs to the membrane fusion protein (MFP) (TC 8.A.1) family.

Its subcellular location is the cell inner membrane. In terms of biological role, forms an efflux pump with AaeB. This is p-hydroxybenzoic acid efflux pump subunit AaeA from Enterobacter sp. (strain 638).